Consider the following 835-residue polypeptide: Leucine--tRNA ligase (835 aa).

The 'HIGH' region signature appears at 36-46; sequence PYPSGKIHVGH. The 'KMSKS' region signature appears at 602 to 606; sequence KMSKS. Position 605 (K605) interacts with ATP.

This sequence belongs to the class-I aminoacyl-tRNA synthetase family.

The protein localises to the cytoplasm. It catalyses the reaction tRNA(Leu) + L-leucine + ATP = L-leucyl-tRNA(Leu) + AMP + diphosphate. The chain is Leucine--tRNA ligase from Rickettsia conorii (strain ATCC VR-613 / Malish 7).